The primary structure comprises 799 residues: Heat shock protein 90-6, mitochondrial (799 aa).

Residues 1–48 constitute a mitochondrion transit peptide; sequence MIRLSKRSVSTLLRSGNQSFRIAAAASTSRSSPSATDVKRSDTESRWY. A compositionally biased stretch (low complexity) spans 23–35; the sequence is AAAASTSRSSPSA. The tract at residues 23 to 61 is disordered; the sequence is AAAASTSRSSPSATDVKRSDTESRWYSSLTNGQSKNSGS. The span at 46-61 shows a compositional bias: polar residues; that stretch reads RWYSSLTNGQSKNSGS. ATP contacts are provided by residues glutamate 124, asparagine 128, aspartate 170, methionine 175, 190–191, 214–219, and threonine 269; these read SG and QFGVGF. The disordered stretch occupies residues 314 to 337; the sequence is EVEVEDDPTETKKDDQDDQTEKKK. Over residues 322–334 the composition is skewed to basic and acidic residues; the sequence is TETKKDDQDDQTE. Residue arginine 464 participates in ATP binding. The segment covering 766-777 has biased composition (polar residues); it reads SPEVQPQQQQMA. Positions 766 to 799 are disordered; it reads SPEVQPQQQQMAHSHDAETFEAEVVEPVEVDGKK. Acidic residues predominate over residues 784-799; that stretch reads TFEAEVVEPVEVDGKK.

It belongs to the heat shock protein 90 family. Interacts with P23-1.

Its subcellular location is the mitochondrion. Its function is as follows. Molecular chaperone which stabilizes unfolding protein intermediates and functions as a folding molecular chaperone that assists the non-covalent folding of proteins in an ATP-dependent manner. The chain is Heat shock protein 90-6, mitochondrial from Arabidopsis thaliana (Mouse-ear cress).